We begin with the raw amino-acid sequence, 589 residues long: Alpha-1,2-mannosyltransferase MNN22 (589 aa).

The Cytoplasmic segment spans residues 1–16 (MGSIFKDGRRILVRPK). A helical transmembrane segment spans residues 17–33 (SLIICLCLISIIFTQLI). Over 34–589 (RYQYQLIADE…NTIAWLGKKT (556 aa)) the chain is Extracellular. The tract at residues 50 to 77 (EDHSSSQSLKNTKLNSTRSSSPISPPKS) is disordered. The segment covering 54 to 71 (SSQSLKNTKLNSTRSSSP) has biased composition (polar residues). N-linked (GlcNAc...) asparagine glycosylation is found at Asn64, Asn332, and Asn530.

The protein belongs to the MNN1/MNT family.

The protein resides in the golgi apparatus membrane. The protein operates within protein modification; protein glycosylation. Functionally, alpha-1,2-mannosyltransferase required for cell wall integrity. Responsible for addition of the first alpha-1,2-linked mannose to form the branches on the mannan backbone of oligosaccharides. Addition of alpha-1,2-mannose is required for stabilization of the alpha-1,6-mannose backbone and hence regulates mannan fibril length; and is important for both immune recognition and virulence. The polypeptide is Alpha-1,2-mannosyltransferase MNN22 (MNN22) (Candida albicans (strain SC5314 / ATCC MYA-2876) (Yeast)).